Consider the following 459-residue polypeptide: Tryptophan synthase beta chain (459 aa).

Lys-121 carries the post-translational modification N6-(pyridoxal phosphate)lysine.

Belongs to the TrpB family. As to quaternary structure, tetramer of two alpha and two beta chains. It depends on pyridoxal 5'-phosphate as a cofactor.

It carries out the reaction (1S,2R)-1-C-(indol-3-yl)glycerol 3-phosphate + L-serine = D-glyceraldehyde 3-phosphate + L-tryptophan + H2O. The protein operates within amino-acid biosynthesis; L-tryptophan biosynthesis; L-tryptophan from chorismate: step 5/5. Its function is as follows. The beta subunit is responsible for the synthesis of L-tryptophan from indole and L-serine. This is Tryptophan synthase beta chain (trpB) from Pyrococcus horikoshii (strain ATCC 700860 / DSM 12428 / JCM 9974 / NBRC 100139 / OT-3).